We begin with the raw amino-acid sequence, 152 residues long: Large ribosomal subunit protein uL22 (152 aa).

Positions 124–145 (APKKAAAKKAAPAKETTPAATE) are enriched in low complexity. The segment at 124 to 152 (APKKAAAKKAAPAKETTPAATESKTEGAE) is disordered.

Belongs to the universal ribosomal protein uL22 family. As to quaternary structure, part of the 50S ribosomal subunit.

In terms of biological role, this protein binds specifically to 23S rRNA; its binding is stimulated by other ribosomal proteins, e.g. L4, L17, and L20. It is important during the early stages of 50S assembly. It makes multiple contacts with different domains of the 23S rRNA in the assembled 50S subunit and ribosome. The globular domain of the protein is located near the polypeptide exit tunnel on the outside of the subunit, while an extended beta-hairpin is found that lines the wall of the exit tunnel in the center of the 70S ribosome. The polypeptide is Large ribosomal subunit protein uL22 (Salinispora tropica (strain ATCC BAA-916 / DSM 44818 / JCM 13857 / NBRC 105044 / CNB-440)).